A 302-amino-acid chain; its full sequence is RNA polymerase II holoenzyme cyclin-like subunit (302 aa).

The 90-residue stretch at glutamine 53–serine 142 folds into the Cyclin N-terminal domain.

It belongs to the cyclin family. Cyclin C subfamily. In terms of assembly, component of the srb8-11 complex, a regulatory module of the Mediator complex.

The protein resides in the nucleus. Its function is as follows. Component of the srb8-11 complex. The srb8-11 complex is a regulatory module of the Mediator complex which is itself involved in regulation of basal and activated RNA polymerase II-dependent transcription. The srb8-11 complex may be involved in the transcriptional repression of a subset of genes regulated by Mediator. It may inhibit the association of the Mediator complex with RNA polymerase II to form the holoenzyme complex. The srb8-11 complex phosphorylates the C-terminal domain (CTD) of the largest subunit of RNA polymerase II. This Aspergillus clavatus (strain ATCC 1007 / CBS 513.65 / DSM 816 / NCTC 3887 / NRRL 1 / QM 1276 / 107) protein is RNA polymerase II holoenzyme cyclin-like subunit (ssn8).